Reading from the N-terminus, the 202-residue chain is MAAPGRRWSVLLFRALQSLSARRALHDTAPPRDVLLFEHERGRFFAVLGLFCAGQGVFWASLAIASLARPPTPVRPTDAKTPDHGGLDLRSTLWRYGLAVGCGAIGSLVLGAGLLFSLRSVRSVMLRAGGKQVTLTTHAPFGWGAHFTVPLNQVSCMAHRGEVPAMLPLKVKGRRFYFLLDKAGHFPNTKLFDNTVGAYRSL.

The Mitochondrial matrix portion of the chain corresponds to 1 to 43 (MAAPGRRWSVLLFRALQSLSARRALHDTAPPRDVLLFEHERGR). A helical membrane pass occupies residues 44–64 (FFAVLGLFCAGQGVFWASLAI). Topologically, residues 65–97 (ASLARPPTPVRPTDAKTPDHGGLDLRSTLWRYG) are mitochondrial intermembrane. A helical transmembrane segment spans residues 98-118 (LAVGCGAIGSLVLGAGLLFSL). Over 119 to 202 (RSVRSVMLRA…DNTVGAYRSL (84 aa)) the chain is Mitochondrial matrix.

The protein belongs to the TMEM223 family. As to quaternary structure, associates with the mitochondrial ribosome.

It is found in the mitochondrion inner membrane. Mitochondrial ribosome-associated protein involved in the first steps of cytochrome c oxidase complex (complex IV) biogenesis. Stimulates the translation of MT-CO1 mRNA and is a constituent of early MT-CO1 assembly intermediates. This is Transmembrane protein 223 from Bos taurus (Bovine).